Reading from the N-terminus, the 195-residue chain is Imidazoleglycerol-phosphate dehydratase (195 aa).

The protein belongs to the imidazoleglycerol-phosphate dehydratase family.

It is found in the cytoplasm. The enzyme catalyses D-erythro-1-(imidazol-4-yl)glycerol 3-phosphate = 3-(imidazol-4-yl)-2-oxopropyl phosphate + H2O. It functions in the pathway amino-acid biosynthesis; L-histidine biosynthesis; L-histidine from 5-phospho-alpha-D-ribose 1-diphosphate: step 6/9. The protein is Imidazoleglycerol-phosphate dehydratase of Clostridium botulinum (strain Alaska E43 / Type E3).